The chain runs to 461 residues: Bifunctional protein HldE (461 aa).

The ribokinase stretch occupies residues Met1–Glu312. Residue Asn191–Glu194 coordinates ATP. Residue Asp259 is part of the active site. Positions Phe334–Lys461 are cytidylyltransferase.

In the N-terminal section; belongs to the carbohydrate kinase PfkB family. It in the C-terminal section; belongs to the cytidylyltransferase family. As to quaternary structure, homodimer.

The enzyme catalyses D-glycero-beta-D-manno-heptose 7-phosphate + ATP = D-glycero-beta-D-manno-heptose 1,7-bisphosphate + ADP + H(+). The catalysed reaction is D-glycero-beta-D-manno-heptose 1-phosphate + ATP + H(+) = ADP-D-glycero-beta-D-manno-heptose + diphosphate. It participates in nucleotide-sugar biosynthesis; ADP-L-glycero-beta-D-manno-heptose biosynthesis; ADP-L-glycero-beta-D-manno-heptose from D-glycero-beta-D-manno-heptose 7-phosphate: step 1/4. It functions in the pathway nucleotide-sugar biosynthesis; ADP-L-glycero-beta-D-manno-heptose biosynthesis; ADP-L-glycero-beta-D-manno-heptose from D-glycero-beta-D-manno-heptose 7-phosphate: step 3/4. Its function is as follows. Catalyzes the phosphorylation of D-glycero-D-manno-heptose 7-phosphate at the C-1 position to selectively form D-glycero-beta-D-manno-heptose-1,7-bisphosphate. In terms of biological role, catalyzes the ADP transfer from ATP to D-glycero-beta-D-manno-heptose 1-phosphate, yielding ADP-D-glycero-beta-D-manno-heptose. This Campylobacter jejuni subsp. doylei (strain ATCC BAA-1458 / RM4099 / 269.97) protein is Bifunctional protein HldE.